We begin with the raw amino-acid sequence, 751 residues long: MHTDIIIGDQFAANNNYWVMQSPELDYRHELMGRLHKIEPADVELEVLAAAAAAANNNNNTSSNNNHSSNSSSNNSNGSQTPNGNNNSSLATGGHQHHQFHHHLHHHHSHQHHHQHHHLHQHHSHSLQSGESGASEAWPHLPAPSYASDVPHAQQQQLQPAGSPNSNSNGAYGCAPLYDGAPYEVALGYGGAVVASTGGATSSDKEYLYETKNKEALYADPLDDPYQRPVLWDDITTSIQNIDPENALMLSSSGSSNNNGSSNSSSNTGESATSQLPQVKMEAIDESLLETFSTPLLSPLEIKTEKQQRQQQHQHQQQQQQQQQQQQQHQQQHQQQYQQQHYQQHYQQQHLYQHHPSLALPGLPPAVDVVELQLQQQHQQQQHLQHNNSSSSSPKLATPGDNSGNTSSYQQQYASQLVSGSGGGYLNGSSSNSYGYSWHSSQSFHTKYQIHPPSAAASATASATATPTAQLGAQQQQQQQQQQQLQQLCPPAAPSTPSTSSSSISSSSASSASRHMFVPPLTPPSSDPGSPGSSMVAAAAAAAAQRRTTPPPPYQQGHVMGLINPPPTLQLLGGAATGSNNSCTTTLTTLTPASAIQQQQQQPQQQQVPQQQPPPTPRSSGGGRRGRHSHHQPGTAAHIASLMSVRTVRYNRRNNPELEKRRIHHCDFVGCSKVYTKSSHLKAHQRIHTGEKPYTCQWPECEWRFARSDELTRHYRKHTGAKPFKCIVCERSFARSDHLALHMKRHLPKNK.

Residues 57-89 show a composition bias toward low complexity; the sequence is NNNNTSSNNNHSSNSSSNNSNGSQTPNGNNNSS. Disordered regions lie at residues 57–167, 248–275, 304–351, 374–410, 458–578, and 594–639; these read NNNN…PNSN, LMLS…ATSQ, TEKQ…QQHL, LQQQ…SSYQ, SATA…AATG, and SAIQ…AAHI. The span at 95–125 shows a compositional bias: basic residues; the sequence is HQHHQFHHHLHHHHSHQHHHQHHHLHQHHSH. Residues 153 to 167 are compositionally biased toward polar residues; the sequence is AQQQQLQPAGSPNSN. 3 stretches are compositionally biased toward low complexity: residues 251–267, 309–351, and 374–393; these read SSSG…SSSN, RQQQ…QQHL, and LQQQ…SSSS. Polar residues predominate over residues 400 to 410; that stretch reads GDNSGNTSSYQ. 3 stretches are compositionally biased toward low complexity: residues 458–513, 527–548, and 594–610; these read SATA…SSAS, DPGS…QRRT, and SAIQ…QVPQ. C2H2-type zinc fingers lie at residues 664–688, 694–718, and 724–746; these read HHCD…QRIH, YTCQ…YRKH, and FKCI…MKRH.

Belongs to the krueppel C2H2-type zinc-finger protein family. In terms of tissue distribution, highly enriched in the peripheral nervous system but is absent from the central nervous system. Expressed in neurons with more than one dendrite including da neurons, bd neurons and the dmd1 neuron but undetectable in neurons with single dendrites such as external sensory organ neurons and chodonotal neurons.

It localises to the nucleus. In terms of biological role, transcriptional regulator which promotes dendrite growth by suppressing, either directly or indirectly, the expression of the microtubule-severing protein spas. Determines multipolar neuron morphology in postmitotic neurons by positively regulating the expression of genes involved in nuclear positioning including several dynein genes and the nuclear migration protein nudC. The polypeptide is Dendritic arbor reduction protein 1 (Drosophila melanogaster (Fruit fly)).